The chain runs to 315 residues: tRNA pseudouridine synthase B (315 aa).

The active-site Nucleophile is D54.

Belongs to the pseudouridine synthase TruB family. Type 1 subfamily.

It carries out the reaction uridine(55) in tRNA = pseudouridine(55) in tRNA. In terms of biological role, responsible for synthesis of pseudouridine from uracil-55 in the psi GC loop of transfer RNAs. The chain is tRNA pseudouridine synthase B from Cupriavidus taiwanensis (strain DSM 17343 / BCRC 17206 / CCUG 44338 / CIP 107171 / LMG 19424 / R1) (Ralstonia taiwanensis (strain LMG 19424)).